The primary structure comprises 605 residues: Elongation factor 4 (605 aa).

The region spanning 9–192 is the tr-type G domain; sequence SRIRNFCIIA…AIIARVPSPA (184 aa). GTP is bound by residues 21 to 26 and 139 to 142; these read DHGKST and NKID.

The protein belongs to the TRAFAC class translation factor GTPase superfamily. Classic translation factor GTPase family. LepA subfamily.

It localises to the cell inner membrane. The enzyme catalyses GTP + H2O = GDP + phosphate + H(+). In terms of biological role, required for accurate and efficient protein synthesis under certain stress conditions. May act as a fidelity factor of the translation reaction, by catalyzing a one-codon backward translocation of tRNAs on improperly translocated ribosomes. Back-translocation proceeds from a post-translocation (POST) complex to a pre-translocation (PRE) complex, thus giving elongation factor G a second chance to translocate the tRNAs correctly. Binds to ribosomes in a GTP-dependent manner. This chain is Elongation factor 4, found in Chlorobium phaeovibrioides (strain DSM 265 / 1930) (Prosthecochloris vibrioformis (strain DSM 265)).